A 262-amino-acid chain; its full sequence is Plant intracellular Ras-group-related LRR protein 7 (262 aa).

LRR repeat units lie at residues Trp19–Val42, Gly43–Leu66, Asn68–Leu89, Arg90–Leu112, Ser113–Leu135, Asn137–Cys158, Ser159–Leu181, Val182–Asp204, and Lys206–Glu231.

The protein belongs to the SHOC2 family. As to expression, widely expressed and preferentially in leaf sheathes.

Functionally, leucine-rich repeat protein that likely mediates protein interactions, possibly in the context of signal transduction. This Oryza sativa subsp. japonica (Rice) protein is Plant intracellular Ras-group-related LRR protein 7 (IRL7).